The primary structure comprises 275 residues: ATP synthase subunit delta (275 aa).

It belongs to the ATPase delta chain family. F-type ATPases have 2 components, F(1) - the catalytic core - and F(0) - the membrane proton channel. F(1) has five subunits: alpha(3), beta(3), gamma(1), delta(1), epsilon(1). F(0) has three main subunits: a(1), b(2) and c(10-14). The alpha and beta chains form an alternating ring which encloses part of the gamma chain. F(1) is attached to F(0) by a central stalk formed by the gamma and epsilon chains, while a peripheral stalk is formed by the delta and b chains.

Its subcellular location is the cell membrane. Its function is as follows. F(1)F(0) ATP synthase produces ATP from ADP in the presence of a proton or sodium gradient. F-type ATPases consist of two structural domains, F(1) containing the extramembraneous catalytic core and F(0) containing the membrane proton channel, linked together by a central stalk and a peripheral stalk. During catalysis, ATP synthesis in the catalytic domain of F(1) is coupled via a rotary mechanism of the central stalk subunits to proton translocation. In terms of biological role, this protein is part of the stalk that links CF(0) to CF(1). It either transmits conformational changes from CF(0) to CF(1) or is implicated in proton conduction. The protein is ATP synthase subunit delta of Nocardioides sp. (strain ATCC BAA-499 / JS614).